The sequence spans 784 residues: PWWP domain-containing protein 2A (784 aa).

4 disordered regions span residues 1 to 32 (MAAV…LGRL), 244 to 272 (KPVE…PEDV), 463 to 567 (AKEK…EMQD), and 605 to 654 (SSSA…SSKE). Positions 244 to 266 (KPVESIQEESKSFHEEPLVKSEE) are enriched in basic and acidic residues. Residues 536 to 556 (TRYSATRSAGETPSEIQSPSN) are compositionally biased toward polar residues. Over residues 605–614 (SSSASVCSSD) the composition is skewed to low complexity. The 61-residue stretch at 684–744 (VGDIVWAKIY…LSQLTPFLEN (61 aa)) folds into the PWWP domain.

The protein localises to the nucleus. Functionally, H2A.Z-specific chromatin binding protein which plays an important role in the neural crest cell differentiation and/or migration during early development and is essential for the development of the head and eye. Acts as an adapter between distinct nucleosome components (H3K36me3 or H2A.Z) and chromatin-modifying complexes, contributing to the regulation of the levels of histone acetylation at actively transcribed genes. The protein is PWWP domain-containing protein 2A (pwwp2a) of Xenopus tropicalis (Western clawed frog).